The sequence spans 564 residues: MNNSSELIAVINGFRNSGRFCDISIVINDERINAHKLILSGASEYFSILFSNNFIDSNEYEVNLSHLDYQSVNDLIDYIYGIPLSLTNDNVKYILSTADFLQIGSAITECENYILKNLCSKNCIDFYIYADKYNNKKIESASFNTILQNILRLINDENFKYLTEESMIKILSDDMLNIKNEDFAPLILIKWLESTQQSCTVELLRCLRISLLSPQVIKSLYSHQLVSSIYECITFLNNIAFLDESFPRYHSIELISIGISNSHDKISINCYNHKKNTWEMISSRRYRCSFAVAVLDNIIYMMGGYDQSPYRSSKVIAYNTCTNSWIYDIPELKYPRSNCGGLADDEYIYCIGGIRDQDSSLTSSIDKWKPSKPYWQKYAKMREPKCDMGVAMLNGLIYVMGGIVKGDTCTDALESLSEDGWMKHQRLPIKMSNMSTIVHDGKIYISGGYNNSSVVNVISNLVLSYNPIYDEWTKLSSLNIPRINPALWSAHNKLYVGGGISDDVRTNTSETYDKEKDCWTLDNGHVLPRNYIMYKCEPIKHKYPLEKTQYTNDFLKYLESFIGS.

A BTB domain is found at 21–88 (CDISIVINDE…IYGIPLSLTN (68 aa)). Kelch repeat units follow at residues 252 to 297 (IELI…VLDN), 298 to 346 (IIYM…ADDE), 347 to 395 (YIYC…MLNG), 397 to 441 (IYVM…VHDG), 442 to 492 (KIYI…SAHN), and 494 to 539 (LYVG…CEPI).

Belongs to the poxviruses A55 protein family. Interacts (via BTB domain) with host CUL3.

The protein resides in the host cytoplasm. In terms of biological role, probable substrate-specific adapter of CUL3-containing E3 ubiquitin-protein ligases which mediate the ubiquitination and subsequent proteasomal degradation of host target proteins. This chain is Kelch repeat and BTB domain-containing protein A55 (KBTB1), found in Bos taurus (Bovine).